The primary structure comprises 595 residues: MFS-type transporter phomT (595 aa).

The segment covering methionine 1–lysine 11 has biased composition (basic and acidic residues). Residues methionine 1–aspartate 62 are disordered. Over residues proline 30–valine 48 the composition is skewed to polar residues. Residues asparagine 39 and asparagine 44 are each glycosylated (N-linked (GlcNAc...) asparagine). Helical transmembrane passes span isoleucine 91–alanine 111, aspartate 126–glycine 146, and tryptophan 156–proline 176. An N-linked (GlcNAc...) asparagine glycan is attached at asparagine 177. The next 3 membrane-spanning stretches (helical) occupy residues alanine 186–serine 206, alanine 217–phenylalanine 237, and tryptophan 245–leucine 265. An N-linked (GlcNAc...) asparagine glycan is attached at asparagine 277. 7 helical membrane passes run isoleucine 290 to glycine 310, valine 320 to tryptophan 340, valine 362 to phenylalanine 382, isoleucine 409 to proline 429, tryptophan 451 to valine 471, alanine 483 to valine 503, and valine 559 to phenylalanine 579.

It belongs to the major facilitator superfamily. TCR/Tet family.

Its subcellular location is the cell membrane. Functionally, MFS-type transporter; part of the gene cluster that mediates the biosynthesis of the phomopsins, a group of hexapeptide mycotoxins which infects lupins and causes lupinosis disease in livestock. PhomT is likely to be involved in the cellular export of phomopsins. This is MFS-type transporter phomT from Diaporthe leptostromiformis (Lupinosis disease fungus).